The primary structure comprises 234 residues: 2-C-methyl-D-erythritol 4-phosphate cytidylyltransferase (234 aa).

It belongs to the IspD/TarI cytidylyltransferase family. IspD subfamily.

The catalysed reaction is 2-C-methyl-D-erythritol 4-phosphate + CTP + H(+) = 4-CDP-2-C-methyl-D-erythritol + diphosphate. Its pathway is isoprenoid biosynthesis; isopentenyl diphosphate biosynthesis via DXP pathway; isopentenyl diphosphate from 1-deoxy-D-xylulose 5-phosphate: step 2/6. In terms of biological role, catalyzes the formation of 4-diphosphocytidyl-2-C-methyl-D-erythritol from CTP and 2-C-methyl-D-erythritol 4-phosphate (MEP). This chain is 2-C-methyl-D-erythritol 4-phosphate cytidylyltransferase, found in Photobacterium profundum (strain SS9).